The chain runs to 167 residues: UPF0102 protein RB9115 (167 aa).

It belongs to the UPF0102 family.

This chain is UPF0102 protein RB9115, found in Rhodopirellula baltica (strain DSM 10527 / NCIMB 13988 / SH1).